We begin with the raw amino-acid sequence, 839 residues long: Oligopeptide transporter phomP2 (839 aa).

The tract at residues 1–58 (MEADPKVPFTDEMNIQDEHNWESGSWSSSRRSNDSNVTLLSRRSSVEQHEDERQKDSD) is disordered. The span at 23-36 (SGSWSSSRRSNDSN) shows a compositional bias: low complexity. 2 N-linked (GlcNAc...) asparagine glycosylation sites follow: asparagine 33 and asparagine 36. Over residues 44–58 (SSVEQHEDERQKDSD) the composition is skewed to basic and acidic residues. 6 helical membrane-spanning segments follow: residues 105-125 (VWLL…VYYF), 177-197 (ALVV…GPLS), 210-230 (PWAI…VGLY), 268-288 (VFMA…FVFP), 315-335 (GFGL…SPLF), and 345-365 (FVGA…SDAL). Asparagine 386 and asparagine 398 each carry an N-linked (GlcNAc...) asparagine glycan. 4 consecutive transmembrane segments (helical) span residues 415–435 (AMHF…AVLF), 478–498 (AWYA…LYAG), 505–525 (WGLQ…GMLF), and 585–605 (WELL…NWAV). Over residues 629–646 (QGLGLGQGGGGGGGGGGQ) the composition is skewed to gly residues. The tract at residues 629-654 (QGLGLGQGGGGGGGGGGQQQRAAGAH) is disordered. 3 helical membrane-spanning segments follow: residues 665–685 (NFFS…FGGG), 697–717 (WLLP…WLIH), and 728–748 (WPLH…FPTT). N-linked (GlcNAc...) asparagine glycosylation occurs at asparagine 749. The helical transmembrane segment at 781-801 (AGLDCGAQLVQMVLGVAFLVF) threads the bilayer.

It belongs to the oligopeptide OPT transporter family.

The protein resides in the membrane. Functionally, oligopeptide transporter; part of the gene cluster that mediates the biosynthesis of the phomopsins, a group of hexapeptide mycotoxins which infects lupins and causes lupinosis disease in livestock. The sequence is that of Oligopeptide transporter phomP2 from Diaporthe leptostromiformis (Lupinosis disease fungus).